We begin with the raw amino-acid sequence, 250 residues long: Flavin-dependent thymidylate synthase (250 aa).

Residues 7 to 233 (LRVQLIAKTE…PQVFSDFEIV (227 aa)) enclose the ThyX domain. Residues S71, 95-97 (RHR), and Q103 each bind FAD. DUMP-binding positions include 92-95 (ELIR), 103-107 (QLSQR), and R172. Positions 95–105 (RHRHFSYSQLS) match the ThyX motif motif. FAD contacts are provided by residues 188–190 (NYR) and H194. R199 lines the dUMP pocket. The Involved in ionization of N3 of dUMP, leading to its activation role is filled by R199.

Belongs to the thymidylate synthase ThyX family. In terms of assembly, homotetramer. The cofactor is FAD.

It carries out the reaction dUMP + (6R)-5,10-methylene-5,6,7,8-tetrahydrofolate + NADPH + H(+) = dTMP + (6S)-5,6,7,8-tetrahydrofolate + NADP(+). It participates in pyrimidine metabolism; dTTP biosynthesis. Functionally, catalyzes the reductive methylation of 2'-deoxyuridine-5'-monophosphate (dUMP) to 2'-deoxythymidine-5'-monophosphate (dTMP) while utilizing 5,10-methylenetetrahydrofolate (mTHF) as the methyl donor, and NADPH and FADH(2) as the reductant. The polypeptide is Flavin-dependent thymidylate synthase (Mycolicibacterium vanbaalenii (strain DSM 7251 / JCM 13017 / BCRC 16820 / KCTC 9966 / NRRL B-24157 / PYR-1) (Mycobacterium vanbaalenii)).